We begin with the raw amino-acid sequence, 84 residues long: Chymotrypsin inhibitor Ani s 6 (84 aa).

A signal peptide spans 1–22 (MFQSTFFLVLMVCVATARFANK). Intrachain disulfides connect Cys-25/Cys-58, Cys-34/Cys-54, Cys-38/Cys-50, Cys-42/Cys-79, and Cys-60/Cys-73. The 55-residue stretch at 25–79 (CPPNEEYNECGNPCQEKCDNGEPVICTYQCEHRCFCKQGYVRLTEDGECVPEEFC) folds into the TIL domain.

Belongs to the serine protease inhibitor-like (TIL domain-containing) family.

It localises to the secreted. Functionally, inhibits alpha-chymotrypsin, but not trypsin. The protein is Chymotrypsin inhibitor Ani s 6 of Anisakis simplex (Herring worm).